Reading from the N-terminus, the 70-residue chain is Aurein-3.1 (70 aa).

Positions 1–22 (MAFLKKSLFLVLFLGLVSLSIC) are cleaved as a signal peptide. Residues 23–49 (EKEKRQNEEDEDENEAANHEEGSEEKR) constitute a propeptide that is removed on maturation. Residues 27-48 (RQNEEDEDENEAANHEEGSEEK) are disordered. Residues 38–48 (AANHEEGSEEK) are compositionally biased toward basic and acidic residues. Ile-66 is modified (isoleucine amide).

As to expression, expressed by the skin dorsal glands.

It is found in the secreted. Its subcellular location is the target cell membrane. Functionally, amphipathic alpha-helical antimicrobial peptide with weak to potent activity against Gram-positive bacteria, and no activity against Gram-negative bacteria. Probably acts by disturbing membrane functions with its amphipathic structure. Shows anticancer activity. The sequence is that of Aurein-3.1 from Ranoidea aurea (Green and golden bell frog).